Consider the following 156-residue polypeptide: 6,7-dimethyl-8-ribityllumazine synthase (156 aa).

Residues Phe22, 56 to 58 (AME), and 80 to 82 (AVI) each bind 5-amino-6-(D-ribitylamino)uracil. 85–86 (ET) provides a ligand contact to (2S)-2-hydroxy-3-oxobutyl phosphate. Residue His88 is the Proton donor of the active site. Residue Phe113 participates in 5-amino-6-(D-ribitylamino)uracil binding. Arg127 lines the (2S)-2-hydroxy-3-oxobutyl phosphate pocket.

The protein belongs to the DMRL synthase family.

It catalyses the reaction (2S)-2-hydroxy-3-oxobutyl phosphate + 5-amino-6-(D-ribitylamino)uracil = 6,7-dimethyl-8-(1-D-ribityl)lumazine + phosphate + 2 H2O + H(+). The protein operates within cofactor biosynthesis; riboflavin biosynthesis; riboflavin from 2-hydroxy-3-oxobutyl phosphate and 5-amino-6-(D-ribitylamino)uracil: step 1/2. In terms of biological role, catalyzes the formation of 6,7-dimethyl-8-ribityllumazine by condensation of 5-amino-6-(D-ribitylamino)uracil with 3,4-dihydroxy-2-butanone 4-phosphate. This is the penultimate step in the biosynthesis of riboflavin. In Kosmotoga olearia (strain ATCC BAA-1733 / DSM 21960 / TBF 19.5.1), this protein is 6,7-dimethyl-8-ribityllumazine synthase.